The sequence spans 111 residues: Cytochrome c (111 aa).

Residue A1 is modified to N-acetylalanine. Heme c contacts are provided by C22, C25, and H26. Position 80 is an N6,N6,N6-trimethyllysine (K80). Position 88 (M88) interacts with heme c. K94 carries the post-translational modification N6,N6,N6-trimethyllysine.

The protein belongs to the cytochrome c family. Post-translationally, binds 1 heme c group covalently per subunit.

The protein localises to the mitochondrion intermembrane space. In terms of biological role, electron carrier protein. The oxidized form of the cytochrome c heme group can accept an electron from the heme group of the cytochrome c1 subunit of cytochrome reductase. Cytochrome c then transfers this electron to the cytochrome oxidase complex, the final protein carrier in the mitochondrial electron-transport chain. This chain is Cytochrome c, found in Brassica napus (Rape).